The following is a 486-amino-acid chain: Pup--protein ligase (486 aa).

Glu-33 provides a ligand contact to Mg(2+). Arg-76 contributes to the ATP binding site. Residue Tyr-78 participates in Mg(2+) binding. Asp-80 functions as the Proton acceptor in the catalytic mechanism. Glu-86 lines the Mg(2+) pocket. ATP contacts are provided by Thr-89 and Trp-451.

This sequence belongs to the Pup ligase/Pup deamidase family. Pup-conjugating enzyme subfamily.

The catalysed reaction is ATP + [prokaryotic ubiquitin-like protein]-L-glutamate + [protein]-L-lysine = ADP + phosphate + N(6)-([prokaryotic ubiquitin-like protein]-gamma-L-glutamyl)-[protein]-L-lysine.. Its pathway is protein degradation; proteasomal Pup-dependent pathway. The protein operates within protein modification; protein pupylation. Functionally, catalyzes the covalent attachment of the prokaryotic ubiquitin-like protein modifier Pup to the proteasomal substrate proteins, thereby targeting them for proteasomal degradation. This tagging system is termed pupylation. The ligation reaction involves the side-chain carboxylate of the C-terminal glutamate of Pup and the side-chain amino group of a substrate lysine. The polypeptide is Pup--protein ligase (Bifidobacterium longum (strain DJO10A)).